The sequence spans 159 residues: G-protein-signaling modulator 3 (159 aa).

Residues 1 to 54 (MEAERPQEEDGEQSLPQDDQGWPPVNATARPWRSAPPSPPPPGTRHTALGPRSG) form a disordered region. Phosphoserine is present on residues S34, S38, S55, and S58. The span at 34–43 (SAPPSPPPPG) shows a compositional bias: pro residues. Residue T61 is modified to Phosphothreonine. The GoLoco 1 domain maps to 61–83 (TELLLDLVAEAQSRRLEEQRATF). A disordered region spans residues 77–97 (EEQRATFHTPEAPPNLAPAPP). A compositionally biased stretch (pro residues) spans 87-97 (EAPPNLAPAPP). 2 consecutive GoLoco domains span residues 103-125 (KEQL…RSDP) and 131-154 (GQEL…RSRP).

The protein resides in the cytoplasm. Functionally, interacts with subunit of G(i) alpha proteins and regulates the activation of G(i) alpha proteins. In Mus musculus (Mouse), this protein is G-protein-signaling modulator 3 (Gpsm3).